Reading from the N-terminus, the 234-residue chain is Glycerol-3-phosphate acyltransferase (234 aa).

6 helical membrane passes run 4–24 (LLAILVVSYIVGSIPTSLIAG), 56–76 (TVTLIDIIKGVVAAVSVVAFF), 90–110 (VALRLLAGMSAVIGHVFTVFA), 122–142 (AGMLIGIAPVSMLMVIGVFLL), 152–172 (VASILAAIAFPLIIAIRKYLF), and 191–211 (FHDSLDYHLIIFGLIVAIAII).

The protein belongs to the PlsY family. As to quaternary structure, probably interacts with PlsX.

The protein localises to the cell inner membrane. It carries out the reaction an acyl phosphate + sn-glycerol 3-phosphate = a 1-acyl-sn-glycero-3-phosphate + phosphate. The protein operates within lipid metabolism; phospholipid metabolism. Catalyzes the transfer of an acyl group from acyl-phosphate (acyl-PO(4)) to glycerol-3-phosphate (G3P) to form lysophosphatidic acid (LPA). This enzyme utilizes acyl-phosphate as fatty acyl donor, but not acyl-CoA or acyl-ACP. The protein is Glycerol-3-phosphate acyltransferase of Chlorobium chlorochromatii (strain CaD3).